The chain runs to 446 residues: Probable polyamine aminopropyl transferase (446 aa).

Residues 1 to 117 form a unknown region; the sequence is MVEPAIGRNH…KRIACVVSAV (117 aa). Residues 64 to 94 form a disordered region; the sequence is GRGAERWHRSPRQANGRFSNQRYSSTSPNSS. The segment covering 75 to 94 has biased composition (polar residues); sequence RQANGRFSNQRYSSTSPNSS. Positions 116-351 constitute a PABS domain; the sequence is AVIFVATSCV…ELFAKKPGSG (236 aa). Residues 118-353 form a spermidine synthase region; the sequence is IFVATSCVSP…FAKKPGSGSE (236 aa). Residues asparagine 147, glutamate 226, and 251-252 each bind S-methyl-5'-thioadenosine; that span reads DG. Aspartate 269 (proton acceptor) is an active-site residue.

Belongs to the spermidine/spermine synthase family. Homodimer or homotetramer.

It localises to the cytoplasm. It carries out the reaction S-adenosyl 3-(methylsulfanyl)propylamine + putrescine = S-methyl-5'-thioadenosine + spermidine + H(+). Its pathway is amine and polyamine biosynthesis; spermidine biosynthesis; spermidine from putrescine: step 1/1. In terms of biological role, catalyzes the irreversible transfer of a propylamine group from the amino donor S-adenosylmethioninamine (decarboxy-AdoMet) to putrescine (1,4-diaminobutane) to yield spermidine. The chain is Probable polyamine aminopropyl transferase (speE) from Bifidobacterium longum (strain NCC 2705).